An 898-amino-acid polypeptide reads, in one-letter code: Probable LRR receptor-like serine/threonine-protein kinase At4g20450 (898 aa).

A signal peptide spans 1–24 (MEGIHKLIFLALIWIFLITNIVDA). The Extracellular segment spans residues 25 to 535 (QDQQGFISLD…TGPGNNKKKL (511 aa)). Residues Asn-40, Asn-52, Asn-98, Asn-247, Asn-253, Asn-420, Asn-443, Asn-465, Asn-484, and Asn-489 are each glycosylated (N-linked (GlcNAc...) asparagine). LRR repeat units lie at residues 455–477 (QLQK…LAKM), 479–501 (LLTF…LLNM), and 505–526 (GLIT…ESET). A helical transmembrane segment spans residues 536-556 (LVPILASAASVGIIIAVLLLV). The Cytoplasmic portion of the chain corresponds to 557–898 (NILLLRKKKP…FGPEHIPDAR (342 aa)). Residue Thr-582 is modified to Phosphothreonine. Positions 591 to 864 (NNFERPLGEG…QVANELQECL (274 aa)) constitute a Protein kinase domain. ATP is bound by residues 597 to 605 (LGEGGFGVV) and Lys-619. The residue at position 664 (Tyr-664) is a Phosphotyrosine. Asp-716 (proton acceptor) is an active-site residue. Ser-750 carries the post-translational modification Phosphoserine. Thr-751 is subject to Phosphothreonine. A Phosphotyrosine modification is found at Tyr-764. The segment at 864 to 898 (LLTENSRKGGRHDVDSKSSLEQSTSFGPEHIPDAR) is disordered. The span at 868-881 (NSRKGGRHDVDSKS) shows a compositional bias: basic and acidic residues.

It belongs to the protein kinase superfamily. Ser/Thr protein kinase family.

Its subcellular location is the membrane. The catalysed reaction is L-seryl-[protein] + ATP = O-phospho-L-seryl-[protein] + ADP + H(+). It catalyses the reaction L-threonyl-[protein] + ATP = O-phospho-L-threonyl-[protein] + ADP + H(+). This is Probable LRR receptor-like serine/threonine-protein kinase At4g20450 from Arabidopsis thaliana (Mouse-ear cress).